A 1174-amino-acid polypeptide reads, in one-letter code: DNA-directed RNA polymerase subunit beta (1174 aa).

This sequence belongs to the RNA polymerase beta chain family. The RNAP catalytic core consists of 2 alpha, 1 beta, 1 beta' and 1 omega subunit. When a sigma factor is associated with the core the holoenzyme is formed, which can initiate transcription.

It catalyses the reaction RNA(n) + a ribonucleoside 5'-triphosphate = RNA(n+1) + diphosphate. DNA-dependent RNA polymerase catalyzes the transcription of DNA into RNA using the four ribonucleoside triphosphates as substrates. The chain is DNA-directed RNA polymerase subunit beta from Mycolicibacterium gilvum (strain PYR-GCK) (Mycobacterium gilvum (strain PYR-GCK)).